Consider the following 119-residue polypeptide: Tubulin-specific chaperone A (119 aa).

It belongs to the TBCA family. As to quaternary structure, supercomplex made of cofactors A to E. Cofactors A and D function by capturing and stabilizing tubulin in a quasi-native conformation. Cofactor E binds to the cofactor D-tubulin complex; interaction with cofactor C then causes the release of tubulin polypeptides that are committed to the native state.

The protein resides in the cytoplasm. It localises to the cytoskeleton. Functionally, required for the maintenance of microtubule structures and cell polarity. Beta-tubulin-folding protein; may have a regulatory role in the tubulin-folding pathway. The protein is Tubulin-specific chaperone A (alp31) of Schizosaccharomyces pombe (strain 972 / ATCC 24843) (Fission yeast).